The sequence spans 297 residues: 4-hydroxy-tetrahydrodipicolinate synthase (297 aa).

Threonine 55 serves as a coordination point for pyruvate. Residue tyrosine 144 is the Proton donor/acceptor of the active site. Lysine 172 acts as the Schiff-base intermediate with substrate in catalysis. Isoleucine 213 is a binding site for pyruvate.

The protein belongs to the DapA family. Homotetramer; dimer of dimers.

It is found in the cytoplasm. It catalyses the reaction L-aspartate 4-semialdehyde + pyruvate = (2S,4S)-4-hydroxy-2,3,4,5-tetrahydrodipicolinate + H2O + H(+). The protein operates within amino-acid biosynthesis; L-lysine biosynthesis via DAP pathway; (S)-tetrahydrodipicolinate from L-aspartate: step 3/4. Catalyzes the condensation of (S)-aspartate-beta-semialdehyde [(S)-ASA] and pyruvate to 4-hydroxy-tetrahydrodipicolinate (HTPA). This is 4-hydroxy-tetrahydrodipicolinate synthase from Lactococcus lactis subsp. cremoris (strain MG1363).